A 26-amino-acid polypeptide reads, in one-letter code: Alpha-amylase inhibitor 1 (26 aa).

This sequence belongs to the protease inhibitor I6 (cereal trypsin/alpha-amylase inhibitor) family.

The protein localises to the secreted. Its function is as follows. Alpha-amylase inhibitor. The protein is Alpha-amylase inhibitor 1 of Saussurea costus (Costus).